We begin with the raw amino-acid sequence, 151 residues long: Methylglyoxal synthase (151 aa).

The 146-residue stretch at 6 to 151 folds into the MGS-like domain; it reads RVMPAHKHIA…DYDAYLAERV (146 aa). Substrate contacts are provided by residues histidine 19, lysine 23, 45–48, and 65–66; these read TGTT and SG. Catalysis depends on aspartate 71, which acts as the Proton donor/acceptor. Histidine 98 provides a ligand contact to substrate.

This sequence belongs to the methylglyoxal synthase family.

It catalyses the reaction dihydroxyacetone phosphate = methylglyoxal + phosphate. Functionally, catalyzes the formation of methylglyoxal from dihydroxyacetone phosphate. This is Methylglyoxal synthase from Aliivibrio fischeri (strain MJ11) (Vibrio fischeri).